The following is a 273-amino-acid chain: Soluble P-type ATPase-like phosphatase (273 aa).

The 4-aspartylphosphate intermediate role is filled by aspartate 8.

Belongs to the cation transport ATPase (P-type) (TC 3.A.3) family. Type IB subfamily. Mg(2+) serves as cofactor.

Inhibited by orthovanadate. Functionally, most probably acts as a phosphatase in the cytosol. The polypeptide is Soluble P-type ATPase-like phosphatase (patS) (Methanocaldococcus jannaschii (strain ATCC 43067 / DSM 2661 / JAL-1 / JCM 10045 / NBRC 100440) (Methanococcus jannaschii)).